The chain runs to 127 residues: Large ribosomal subunit protein bL17 (127 aa).

It belongs to the bacterial ribosomal protein bL17 family. As to quaternary structure, part of the 50S ribosomal subunit. Contacts protein L32.

The sequence is that of Large ribosomal subunit protein bL17 from Lactobacillus gasseri (strain ATCC 33323 / DSM 20243 / BCRC 14619 / CIP 102991 / JCM 1131 / KCTC 3163 / NCIMB 11718 / NCTC 13722 / AM63).